The chain runs to 505 residues: Beta-glucosidase 18 (505 aa).

Positions 1-26 (MAGGSKTRIHASLVSTLLLLLPLASA) are cleaved as a signal peptide. Gln-46 serves as a coordination point for a beta-D-glucoside. Residue Asn-55 is glycosylated (N-linked (GlcNAc...) asparagine). A beta-D-glucoside is bound by residues His-148 and 193 to 194 (NE). Catalysis depends on Glu-194, which acts as the Proton donor. Cys-213 and Cys-220 form a disulfide bridge. Tyr-337 serves as a coordination point for a beta-D-glucoside. Cys-345 and Cys-350 are oxidised to a cystine. Residues Glu-408, Trp-457, 464 to 465 (EW), and Phe-473 contribute to the a beta-D-glucoside site. Glu-408 (nucleophile) is an active-site residue.

Belongs to the glycosyl hydrolase 1 family. Expressed in roots, leaves, flowers and pollen.

The catalysed reaction is Hydrolysis of terminal, non-reducing beta-D-glucosyl residues with release of beta-D-glucose.. Hydrolyzes glycosides and monolignol glucosides. Can hydrolyze para-nitrophenyl beta-D-glucopyranoside (pNPGlc) in vitro. Hydrolyzes para-nitrophenyl beta-D-fucopyranoside, para-nitrophenyl beta-D-galactopyranoside and para-nitrophenyl beta-D-xylopyranoside in vitro. Hydrolyzes the monolignol glucosides coniferin and syringin with high catalytic efficiencies. The polypeptide is Beta-glucosidase 18 (Oryza sativa subsp. japonica (Rice)).